The primary structure comprises 245 residues: Mitochondrial import inner membrane translocase subunit Tim21 (245 aa).

The N-terminal 18 residues, 1 to 18 (MICAFLRVVRHAEKLHGS), are a transit peptide targeting the mitochondrion. A disordered region spans residues 64–97 (FWTQGPDPRKAKEDSSKQVSINRNQREETGVSTS). The span at 70–79 (DPRKAKEDSS) shows a compositional bias: basic and acidic residues. The chain crosses the membrane as a helical span at residues 108 to 128 (TYLIVVLFGVSITGSLLYTIF).

Belongs to the TIM21 family. In terms of assembly, component of the TIM23 complex. Component of the MITRAC (mitochondrial translation regulation assembly intermediate of cytochrome c oxidase complex) complex, the core components of this complex being COA3/MITRAC12 and COX14. Interacts with COA3 and MT-CO1/COX1.

The protein localises to the mitochondrion membrane. Its function is as follows. Participates in the translocation of transit peptide-containing proteins across the mitochondrial inner membrane. Also required for assembly of mitochondrial respiratory chain complex I and complex IV as component of the MITRAC (mitochondrial translation regulation assembly intermediate of cytochrome c oxidase complex) complex. Probably shuttles between the presequence translocase and respiratory-chain assembly intermediates in a process that promotes incorporation of early nuclear-encoded subunits into these complexes. The sequence is that of Mitochondrial import inner membrane translocase subunit Tim21 (Timm21) from Rattus norvegicus (Rat).